The chain runs to 99 residues: Carboxysome shell vertex protein CcmL (99 aa).

The BMV domain occupies 1-83; it reads MKIARVCGTV…IDAAVVAIID (83 aa).

This sequence belongs to the CcmL/EutN family. CcmL subfamily. As to quaternary structure, homopentamer. May interact with CcmK2, this occurs at very high CcmK2 concentrations. Interacts with full-length CcmM.

The protein localises to the carboxysome. Its function is as follows. Probably forms vertices in the carboxysome, a polyhedral inclusion where RuBisCO (ribulose bisphosphate carboxylase, rbcL-rbcS) is sequestered. Has been modeled to induce curvature upon insertion into an otherwise flat hexagonal molecular layer of CcmK subunits. This Thermosynechococcus vestitus (strain NIES-2133 / IAM M-273 / BP-1) protein is Carboxysome shell vertex protein CcmL.